A 238-amino-acid polypeptide reads, in one-letter code: Cysteine-rich venom protein pseudechetoxin-like (238 aa).

Residues Met1–Gly19 form the signal peptide. A propeptide spanning residues Thr20–Ser28 is cleaved from the precursor. The SCP domain occupies Val38–Tyr164. Cystine bridges form between Cys75/Cys153, Cys92/Cys165, Cys148/Cys162, Cys184/Cys191, Cys187/Cys196, Cys200/Cys233, Cys209/Cys227, and Cys218/Cys231. The ShKT domain occupies Cys200–Cys233.

It belongs to the CRISP family. In terms of tissue distribution, expressed by the venom gland.

The protein resides in the secreted. Its function is as follows. Blocks olfactory (CNGA2) and retinal (CNGA1) CNG channel currents. Does not affect neither depolarization- nor caffeine-induced contraction of smooth muscle. The sequence is that of Cysteine-rich venom protein pseudechetoxin-like from Notechis scutatus scutatus (Mainland tiger snake).